We begin with the raw amino-acid sequence, 192 residues long: ATP synthase protein MI25 (192 aa).

The chain crosses the membrane as a helical span at residues 29–49; sequence ISIYNEEMIVARCFIGFLIFS.

It belongs to the ATPase protein MI25 family. As to quaternary structure, F-type ATPases have 2 components, CF(1) - the catalytic core - and CF(0) - the membrane proton channel. CF(1) has five subunits: alpha(3), beta(3), gamma(1), delta(1), epsilon(1). CF(0) has three main subunits: a, b and c.

Its subcellular location is the mitochondrion membrane. In terms of biological role, this is one of the chains of the nonenzymatic component (CF(0) subunit) of the mitochondrial ATPase complex. The protein is ATP synthase protein MI25 of Triticum timopheevii (Timopheev's wheat).